The sequence spans 235 residues: NifU-like protein 2, chloroplastic (235 aa).

The transit peptide at 1 to 16 (MQLLTLNPAAISRTPP) directs the protein to the chloroplast.

The protein belongs to the NifU family. As to quaternary structure, homodimer; disulfide-linked. The cofactor is [2Fe-2S] cluster. As to expression, predominantly expressed in leaves and floral stalks. Ubiquitous (at protein level).

It is found in the plastid. The protein localises to the chloroplast stroma. Its function is as follows. Molecular scaffold for [Fe-S] cluster assembly of chloroplastic iron-sulfur proteins. Required for biogenesis of ferredoxin, a major photosynthetic electron carrier containing [2Fe-2S] cluster. Required for the assembly of photosystem I complex. This chain is NifU-like protein 2, chloroplastic (NIFU2), found in Arabidopsis thaliana (Mouse-ear cress).